The primary structure comprises 869 residues: Aconitate hydratase B (869 aa).

Residues R191, 244 to 246, 417 to 419, and S501 contribute to the substrate site; these read SSR and QDT. [4Fe-4S] cluster contacts are provided by C713, C772, and C775. Substrate-binding residues include R794 and R799.

The protein belongs to the aconitase/IPM isomerase family. In terms of assembly, monomer. [4Fe-4S] cluster serves as cofactor.

It carries out the reaction citrate = D-threo-isocitrate. The catalysed reaction is (2S,3R)-3-hydroxybutane-1,2,3-tricarboxylate = 2-methyl-cis-aconitate + H2O. The protein operates within carbohydrate metabolism; tricarboxylic acid cycle; isocitrate from oxaloacetate: step 2/2. It functions in the pathway organic acid metabolism; propanoate degradation. Functionally, involved in the catabolism of short chain fatty acids (SCFA) via the tricarboxylic acid (TCA)(acetyl degradation route) and probably via the 2-methylcitrate cycle I (propionate degradation route). Catalyzes the reversible isomerization of citrate to isocitrate via cis-aconitate. Catalyzes the hydration of 2-methyl-cis-aconitate to yield (2R,3S)-2-methylisocitrate. The apo form of AcnB functions as a RNA-binding regulatory protein. The protein is Aconitate hydratase B (acnB) of Pseudomonas aeruginosa (strain ATCC 15692 / DSM 22644 / CIP 104116 / JCM 14847 / LMG 12228 / 1C / PRS 101 / PAO1).